A 360-amino-acid chain; its full sequence is Xanthohumol 4-O-methyltransferase (360 aa).

Asp-227 contributes to the S-adenosyl-L-methionine binding site. The active-site Proton acceptor is His-266.

It belongs to the class I-like SAM-binding methyltransferase superfamily. Cation-independent O-methyltransferase family. Homodimer. Highly expressed in lupulin glands. Detected in cones, male flowers and roots.

The protein resides in the cytoplasm. It carries out the reaction xanthohumol + S-adenosyl-L-methionine = 4-O-methylxanthohumol + S-adenosyl-L-homocysteine + H(+). The enzyme catalyses desmethylxanthohumol + S-adenosyl-L-methionine = xanthohumol + S-adenosyl-L-homocysteine + H(+). It catalyses the reaction isoliquiritigenin + S-adenosyl-L-methionine = 2'-O-methylisoliquiritigenin + S-adenosyl-L-homocysteine + H(+). The catalysed reaction is trans-resveratrol + S-adenosyl-L-methionine = 3-methoxy-4',5-dihydroxy-trans-stilbene + S-adenosyl-L-homocysteine + H(+). The protein operates within secondary metabolite biosynthesis. Its activity is regulated as follows. Inhibited by S-adenosyl homocysteine. In terms of biological role, involved in the biosynthesis of prenylated phenolics natural products which contribute to the bitter taste of beer and display broad biological activities. O-methyltransferase with a low substrate selectivity. Methylates chalconaringenin, desmethylxanthohumol, xanthohumol, isoliquiritigenin, butein, 2',4-dihydroxychalcone, resveratrol, genistein and guaiacol. Catalyzes the biosynthesis of 2',4'-dihydroxy-4,6'-dimethoxy-3'-prenylchalcone (4-O-methylxanthohumol). The sequence is that of Xanthohumol 4-O-methyltransferase from Humulus lupulus (European hop).